The following is a 284-amino-acid chain: Phosphatidylglycerol--prolipoprotein diacylglyceryl transferase (284 aa).

7 helical membrane passes run 21–41 (IEVH…FYMA), 62–82 (YFLW…ILIY), 106–126 (FVGI…IASY), 136–156 (LLIY…FGRI), 190–210 (PSQL…VMWA), 218–238 (GLLI…AEFY), and 252–272 (LSMG…ILLY). An a 1,2-diacyl-sn-glycero-3-phospho-(1'-sn-glycerol)-binding site is contributed by arginine 155.

Belongs to the Lgt family.

Its subcellular location is the cell inner membrane. The enzyme catalyses L-cysteinyl-[prolipoprotein] + a 1,2-diacyl-sn-glycero-3-phospho-(1'-sn-glycerol) = an S-1,2-diacyl-sn-glyceryl-L-cysteinyl-[prolipoprotein] + sn-glycerol 1-phosphate + H(+). It participates in protein modification; lipoprotein biosynthesis (diacylglyceryl transfer). Functionally, catalyzes the transfer of the diacylglyceryl group from phosphatidylglycerol to the sulfhydryl group of the N-terminal cysteine of a prolipoprotein, the first step in the formation of mature lipoproteins. The polypeptide is Phosphatidylglycerol--prolipoprotein diacylglyceryl transferase (Helicobacter pylori (strain P12)).